Reading from the N-terminus, the 214-residue chain is DNA-directed RNA polymerase subunit alpha (214 aa).

Belongs to the RNA polymerase alpha chain family. In plastids the minimal PEP RNA polymerase catalytic core is composed of four subunits: alpha, beta, beta', and beta''. When a (nuclear-encoded) sigma factor is associated with the core the holoenzyme is formed, which can initiate transcription.

The protein resides in the plastid. The protein localises to the chloroplast. It catalyses the reaction RNA(n) + a ribonucleoside 5'-triphosphate = RNA(n+1) + diphosphate. In terms of biological role, DNA-dependent RNA polymerase catalyzes the transcription of DNA into RNA using the four ribonucleoside triphosphates as substrates. The protein is DNA-directed RNA polymerase subunit alpha (rpoA) of Euglena viridis (Cercaria viridis).